A 229-amino-acid polypeptide reads, in one-letter code: Putative N-acetylmannosamine-6-phosphate 2-epimerase (229 aa).

The protein belongs to the NanE family.

The catalysed reaction is an N-acyl-D-glucosamine 6-phosphate = an N-acyl-D-mannosamine 6-phosphate. The protein operates within amino-sugar metabolism; N-acetylneuraminate degradation; D-fructose 6-phosphate from N-acetylneuraminate: step 3/5. Functionally, converts N-acetylmannosamine-6-phosphate (ManNAc-6-P) to N-acetylglucosamine-6-phosphate (GlcNAc-6-P). The sequence is that of Putative N-acetylmannosamine-6-phosphate 2-epimerase from Escherichia coli O157:H7.